A 350-amino-acid polypeptide reads, in one-letter code: fMet-Leu-Phe receptor (350 aa).

The Extracellular segment spans residues 1–27; the sequence is METNSSLPTNISGGTPAVSAGYLFLDI. N-linked (GlcNAc...) asparagine glycans are attached at residues asparagine 4 and asparagine 10. Residues 28 to 50 traverse the membrane as a helical segment; sequence ITYLVFAVTFVLGVLGNGLVIWV. Residues 51-61 are Cytoplasmic-facing; sequence AGFRMTHTVTT. Residues 62 to 83 traverse the membrane as a helical segment; the sequence is ISYLNLAVADFCFTSTLPFFMV. At 84-100 the chain is on the extracellular side; sequence RKAMGGHWPFGWFLCKF. Cysteine 98 and cysteine 176 are oxidised to a cystine. The helical transmembrane segment at 101 to 121 threads the bilayer; that stretch reads VFTIVDINLFGSVFLIALIAL. The Cytoplasmic segment spans residues 122–140; it reads DRCVCVLHPVWTQNHRTVS. The helical transmembrane segment at 141-162 threads the bilayer; the sequence is LAKKVIIGPWVMALLLTLPVII. The Extracellular portion of the chain corresponds to 163 to 205; it reads RVTTVPGKTGTVACTFNFSPWTNDPKERINVAVAMLTVRGIIR. Residues 206–226 traverse the membrane as a helical segment; that stretch reads FIIGFSAPMSIVAVSYGLIAT. At 227–242 the chain is on the cytoplasmic side; that stretch reads KIHKQGLIKSSRPLRV. Residues 243–266 form a helical membrane-spanning segment; that stretch reads LSFVAAAFFLCWSPYQVVALIATV. Residues 267–285 are Extracellular-facing; sequence RIRELLQGMYKEIGIAVDV. Residues 286–305 form a helical membrane-spanning segment; the sequence is TSALAFFNSCLNPMLYVFMG. Topologically, residues 306-350 are cytoplasmic; sequence QDFRERLIHALPASLERALTEDSTQTSDTATNSTLPSAEVELQAK. Residues 325–350 are disordered; the sequence is TEDSTQTSDTATNSTLPSAEVELQAK. Residues 326–341 are compositionally biased toward polar residues; sequence EDSTQTSDTATNSTLP. Serine 328 is subject to Phosphoserine. A phosphothreonine mark is found at threonine 329 and threonine 331. Residue serine 332 is modified to Phosphoserine. Phosphothreonine occurs at positions 334 and 336. Serine 338 carries the phosphoserine modification. Phosphothreonine is present on threonine 339.

The protein belongs to the G-protein coupled receptor 1 family. In terms of assembly, interacts with S.aureus chemotaxis inhibitory protein (CHIPS); the interaction blocks the receptor and may thus inhibit the immune response. Phosphorylated; which is necessary for desensitization. As to expression, neutrophils.

Its subcellular location is the cell membrane. Its function is as follows. High affinity receptor for N-formyl-methionyl peptides (fMLP), which are powerful neutrophil chemotactic factors. Binding of fMLP to the receptor stimulates intracellular calcium mobilization and superoxide anion release. This response is mediated via a G-protein that activates a phosphatidylinositol-calcium second messenger system. Receptor for TAFA4, mediates its effects on chemoattracting macrophages, promoting phagocytosis and increasing ROS release. Receptor for cathepsin CTSG, leading to increased phagocyte chemotaxis. The sequence is that of fMet-Leu-Phe receptor (FPR1) from Homo sapiens (Human).